Consider the following 289-residue polypeptide: 4-hydroxy-tetrahydrodipicolinate synthase (289 aa).

Thr-44 lines the pyruvate pocket. Residue Tyr-130 is the Proton donor/acceptor of the active site. Lys-158 acts as the Schiff-base intermediate with substrate in catalysis. Residue Ile-200 participates in pyruvate binding.

This sequence belongs to the DapA family. Homotetramer; dimer of dimers.

It is found in the cytoplasm. The catalysed reaction is L-aspartate 4-semialdehyde + pyruvate = (2S,4S)-4-hydroxy-2,3,4,5-tetrahydrodipicolinate + H2O + H(+). The protein operates within amino-acid biosynthesis; L-lysine biosynthesis via DAP pathway; (S)-tetrahydrodipicolinate from L-aspartate: step 3/4. Its function is as follows. Catalyzes the condensation of (S)-aspartate-beta-semialdehyde [(S)-ASA] and pyruvate to 4-hydroxy-tetrahydrodipicolinate (HTPA). This chain is 4-hydroxy-tetrahydrodipicolinate synthase, found in Archaeoglobus fulgidus (strain ATCC 49558 / DSM 4304 / JCM 9628 / NBRC 100126 / VC-16).